A 431-amino-acid polypeptide reads, in one-letter code: 3-phosphoshikimate 1-carboxyvinyltransferase (431 aa).

The 3-phosphoshikimate site is built by K22, S23, and R27. Phosphoenolpyruvate is bound at residue K22. Phosphoenolpyruvate contacts are provided by G94 and R122. 3-phosphoshikimate-binding residues include S168, S169, Q170, S196, D315, and K342. Position 170 (Q170) interacts with phosphoenolpyruvate. The active-site Proton acceptor is the D315. Residues R346, R390, and K414 each coordinate phosphoenolpyruvate.

This sequence belongs to the EPSP synthase family. As to quaternary structure, monomer.

It localises to the cytoplasm. The enzyme catalyses 3-phosphoshikimate + phosphoenolpyruvate = 5-O-(1-carboxyvinyl)-3-phosphoshikimate + phosphate. It functions in the pathway metabolic intermediate biosynthesis; chorismate biosynthesis; chorismate from D-erythrose 4-phosphate and phosphoenolpyruvate: step 6/7. In terms of biological role, catalyzes the transfer of the enolpyruvyl moiety of phosphoenolpyruvate (PEP) to the 5-hydroxyl of shikimate-3-phosphate (S3P) to produce enolpyruvyl shikimate-3-phosphate and inorganic phosphate. The chain is 3-phosphoshikimate 1-carboxyvinyltransferase from Nitrosomonas europaea (strain ATCC 19718 / CIP 103999 / KCTC 2705 / NBRC 14298).